The primary structure comprises 792 residues: Phenylalanine--tRNA ligase beta subunit (792 aa).

The tRNA-binding domain occupies 39–147; the sequence is GESLGQVVVA…DDAPVGQALA (109 aa). Residues 400–475 form the B5 domain; that stretch reads PQPARIRLRR…RIHGYDRVPT (76 aa). Asp-453, Asp-459, Glu-462, and Glu-463 together coordinate Mg(2+). The FDX-ACB domain maps to 698-791; it reads SRFPSVRRDL…IEREHRARIR (94 aa).

It belongs to the phenylalanyl-tRNA synthetase beta subunit family. Type 1 subfamily. As to quaternary structure, tetramer of two alpha and two beta subunits. Mg(2+) is required as a cofactor.

The protein resides in the cytoplasm. The enzyme catalyses tRNA(Phe) + L-phenylalanine + ATP = L-phenylalanyl-tRNA(Phe) + AMP + diphosphate + H(+). This Xanthomonas euvesicatoria pv. vesicatoria (strain 85-10) (Xanthomonas campestris pv. vesicatoria) protein is Phenylalanine--tRNA ligase beta subunit.